Reading from the N-terminus, the 290-residue chain is Pyridoxal kinase PdxY (290 aa).

Substrate-binding positions include Ser12 and 47–48; that span reads TQ. Residues Asp114, Glu151, Lys184, and 211-214 contribute to the ATP site; that span reads RPLL. Asp225 provides a ligand contact to substrate.

Belongs to the pyridoxine kinase family. PdxY subfamily. As to quaternary structure, homodimer. It depends on Mg(2+) as a cofactor.

The enzyme catalyses pyridoxal + ATP = pyridoxal 5'-phosphate + ADP + H(+). The protein operates within cofactor metabolism; pyridoxal 5'-phosphate salvage; pyridoxal 5'-phosphate from pyridoxal: step 1/1. In terms of biological role, pyridoxal kinase involved in the salvage pathway of pyridoxal 5'-phosphate (PLP). Catalyzes the phosphorylation of pyridoxal to PLP. This chain is Pyridoxal kinase PdxY, found in Pseudomonas putida (strain ATCC 47054 / DSM 6125 / CFBP 8728 / NCIMB 11950 / KT2440).